Here is a 476-residue protein sequence, read N- to C-terminus: UDP-N-acetylmuramate--L-alanine ligase (476 aa).

125–131 (GTHGKTT) contacts ATP.

It belongs to the MurCDEF family.

The protein localises to the cytoplasm. It catalyses the reaction UDP-N-acetyl-alpha-D-muramate + L-alanine + ATP = UDP-N-acetyl-alpha-D-muramoyl-L-alanine + ADP + phosphate + H(+). It functions in the pathway cell wall biogenesis; peptidoglycan biosynthesis. Its function is as follows. Cell wall formation. This Actinobacillus succinogenes (strain ATCC 55618 / DSM 22257 / CCUG 43843 / 130Z) protein is UDP-N-acetylmuramate--L-alanine ligase.